A 330-amino-acid polypeptide reads, in one-letter code: DNA-directed RNA polymerase subunit alpha (330 aa).

Positions 1 to 236 are alpha N-terminal domain (alpha-NTD); sequence MQGSVTEFLK…EQLDAFVDLR (236 aa). Residues 250–330 are alpha C-terminal domain (alpha-CTD); sequence FDPILLRPVD…NWPPASIAED (81 aa).

Belongs to the RNA polymerase alpha chain family. Homodimer. The RNAP catalytic core consists of 2 alpha, 1 beta, 1 beta' and 1 omega subunit. When a sigma factor is associated with the core the holoenzyme is formed, which can initiate transcription.

The catalysed reaction is RNA(n) + a ribonucleoside 5'-triphosphate = RNA(n+1) + diphosphate. Its function is as follows. DNA-dependent RNA polymerase catalyzes the transcription of DNA into RNA using the four ribonucleoside triphosphates as substrates. The polypeptide is DNA-directed RNA polymerase subunit alpha (Vibrio parahaemolyticus serotype O3:K6 (strain RIMD 2210633)).